The chain runs to 88 residues: Small ribosomal subunit protein bS20 (88 aa).

The protein belongs to the bacterial ribosomal protein bS20 family.

In terms of biological role, binds directly to 16S ribosomal RNA. The protein is Small ribosomal subunit protein bS20 of Micrococcus luteus (strain ATCC 4698 / DSM 20030 / JCM 1464 / CCM 169 / CCUG 5858 / IAM 1056 / NBRC 3333 / NCIMB 9278 / NCTC 2665 / VKM Ac-2230) (Micrococcus lysodeikticus).